The chain runs to 337 residues: Mannitol dehydrogenase (337 aa).

Positions 27, 49, 80, 83, 86, 94, and 143 each coordinate Zn(2+).

This sequence belongs to the zinc-containing alcohol dehydrogenase family. Zn(2+) is required as a cofactor.

The catalysed reaction is D-mannitol + NAD(+) = D-mannose + NADH + H(+). Its function is as follows. Oxidizes mannitol to mannose. Provides the initial step by which translocated mannitol is committed to central metabolism and, by regulating mannitol pool size, is important in regulating salt tolerance at the cellular level. The protein is Mannitol dehydrogenase (ELI3) of Petroselinum crispum (Parsley).